A 131-amino-acid polypeptide reads, in one-letter code: Small ribosomal subunit protein uS11 (131 aa).

Belongs to the universal ribosomal protein uS11 family. As to quaternary structure, part of the 30S ribosomal subunit.

Functionally, located on the platform of the 30S subunit. The chain is Small ribosomal subunit protein uS11 from Haloquadratum walsbyi (strain DSM 16790 / HBSQ001).